The chain runs to 396 residues: Argininosuccinate synthase (396 aa).

ATP contacts are provided by residues alanine 10–serine 18 and alanine 37. L-citrulline-binding residues include tyrosine 88 and serine 93. Glycine 118 contacts ATP. L-aspartate contacts are provided by threonine 120, asparagine 124, and aspartate 125. Asparagine 124 provides a ligand contact to L-citrulline. The L-citrulline site is built by arginine 128, serine 176, serine 185, glutamate 261, and tyrosine 273.

This sequence belongs to the argininosuccinate synthase family. Type 1 subfamily. In terms of assembly, homotetramer.

The protein localises to the cytoplasm. The enzyme catalyses L-citrulline + L-aspartate + ATP = 2-(N(omega)-L-arginino)succinate + AMP + diphosphate + H(+). The protein operates within amino-acid biosynthesis; L-arginine biosynthesis; L-arginine from L-ornithine and carbamoyl phosphate: step 2/3. The polypeptide is Argininosuccinate synthase (Nitratidesulfovibrio vulgaris (strain ATCC 29579 / DSM 644 / CCUG 34227 / NCIMB 8303 / VKM B-1760 / Hildenborough) (Desulfovibrio vulgaris)).